We begin with the raw amino-acid sequence, 419 residues long: UDP-N-acetylglucosamine 1-carboxyvinyltransferase (419 aa).

22–23 (KN) contacts phosphoenolpyruvate. Arginine 93 contacts UDP-N-acetyl-alpha-D-glucosamine. Cysteine 117 acts as the Proton donor in catalysis. 2-(S-cysteinyl)pyruvic acid O-phosphothioketal is present on cysteine 117. Aspartate 307 and isoleucine 329 together coordinate UDP-N-acetyl-alpha-D-glucosamine.

This sequence belongs to the EPSP synthase family. MurA subfamily.

It localises to the cytoplasm. The catalysed reaction is phosphoenolpyruvate + UDP-N-acetyl-alpha-D-glucosamine = UDP-N-acetyl-3-O-(1-carboxyvinyl)-alpha-D-glucosamine + phosphate. The protein operates within cell wall biogenesis; peptidoglycan biosynthesis. In terms of biological role, cell wall formation. Adds enolpyruvyl to UDP-N-acetylglucosamine. The polypeptide is UDP-N-acetylglucosamine 1-carboxyvinyltransferase (Shewanella sediminis (strain HAW-EB3)).